Reading from the N-terminus, the 240-residue chain is Ubiquitin domain-containing protein 2 (240 aa).

The disordered stretch occupies residues 1–48; it reads MGGCVGSHHDSSGSLNENSDGTGVALGRNQPLKREKPKWKSDYPMTDG. Residues 12 to 21 are compositionally biased toward polar residues; it reads SGSLNENSDG. Over residues 32–41 the composition is skewed to basic and acidic residues; that stretch reads LKREKPKWKS. The Ubiquitin-like domain maps to 152-227; it reads CQLRLRLSTG…VQVIVSQPPT (76 aa).

It is found in the cytoplasm. This is Ubiquitin domain-containing protein 2 (ubtd2) from Danio rerio (Zebrafish).